We begin with the raw amino-acid sequence, 192 residues long: Cytochrome b-245 light chain (192 aa).

The Cytoplasmic portion of the chain corresponds to 2–7; the sequence is GQIEWA. A helical membrane pass occupies residues 8–30; it reads MWANEQALASGLILMTGGIVATA. The Extracellular portion of the chain corresponds to 31–35; it reads GQFTQ. Residues 36–53 form a helical membrane-spanning segment; that stretch reads WYLGTYSIAAGVLVCLLE. Residues 54-69 are Cytoplasmic-facing; sequence YPRGRRTKGSTMERCE. An intramembrane segment occupies 70-80; sequence QKYMTKVVKAF. The Cytoplasmic segment spans residues 81-86; the sequence is GPLSRN. The helical transmembrane segment at 87–104 threads the bilayer; sequence YYIRAFLHLGLSVPAGFL. A topological domain (extracellular) is located at residue leucine 105. A helical membrane pass occupies residues 106 to 126; sequence ATILGTACLAIASGIYLLAAI. The Cytoplasmic portion of the chain corresponds to 127–192; it reads RGEQWTPIEP…TPCPVTDEVV (66 aa). The disordered stretch occupies residues 134 to 192; it reads IEPKPKERPQVGGTIKQPPSNPPPRPPPEARKKPGEEAVAGVPRGAPRKTPCPVTDEVV. Phosphothreonine is present on threonine 147. Lysine 149 is covalently cross-linked (Glycyl lysine isopeptide (Lys-Gly) (interchain with G-Cter in ubiquitin)).

The protein belongs to the p22phox family. As to quaternary structure, component of the phagocyte NADPH oxidase core complex/cytochrome b558 complex, composed of CYBB (heavy chain (beta)) and CYBA (light chain (alpha)). Component of the phagocyte NADPH oxidase complex composed of an obligatory core heterodimer formed by the membrane proteins CYBA and CYBB and the cytosolic regulatory subunits NCF1/p47-phox, NCF2/p67-phox, NCF4/p40-phox and the small GTPase RAC1 or RAC2. Interacts with NCF1 (via SH3 domain). Interacts with SH3PXD2A. Interacts with DUOX1, DUOX2 and TPO. Interacts with NOX4; this interaction mediates superoxide generation. Interacts with calprotectin (S100A8/9). Interacts with GBP7. Interacts with NOXO1. Forms a heterodimer with NOX3 and is essential for activity and cell membrane localization of NOX3. Interacts with NOX1. Phosphorylation at Thr-147 enhances NADPH oxidase activity by promoting NCF1/p47-phox binding. Post-translationally, ubiquitinated at Lys-149 likely by RNF145.

The protein resides in the cell membrane. In terms of biological role, subunit of NADPH oxidase complexes that is required for the NADPH oxidase activity that generates, in various cell types, superoxide from molecular oxygen utilizing NADPH as an electron donor. Subunit of the phagocyte NADPH oxidase complex that mediates the transfer of electrons from cytosolic NADPH to O2 to produce the superoxide anion (O2(-)). In the activated complex, electrons are first transferred from NADPH to flavin adenine dinucleotide (FAD) and subsequently transferred via two heme molecules to molecular oxygen, producing superoxide through an outer-sphere reaction. Activation of the NADPH oxidase complex is initiated by the assembly of cytosolic subunits of the NADPH oxidase complex with the core NADPH oxidase complex to form a complex at the plasma membrane or phagosomal membrane. This activation process is initiated by phosphorylation dependent binding of the cytosolic NCF1/p47-phox subunit to the C-terminus of CYBA/p22-phox. Aassociates with NOX3 to form a functional NADPH oxidase constitutively generating superoxide. The protein is Cytochrome b-245 light chain of Sus scrofa (Pig).